The chain runs to 587 residues: MTFYLSGFRSFLKLWKSNPYFELGPATSSASFFLGVHCVIGNQQRWFSVKPTTPPNSKILNLLVTKARTLKKGNDSNKQASSGPHYFAAGEAKKRSHLSGNPQNQGHTLPVKSTVQLPTKPLNSEEWDKLKEDFKGKASFEDFVISQMTRSCSSVDVAKSLLAWVAAKNNGIVGYNLLVKYLYLCVFHKQTSEVIDVYEIMKAKYKSLESGGYTLLIRGLIHSDRWREALLLLEDIKKVMVPSKKNYGDCIQGALLHQDVNVAWSLYQELVGHNLIPLLETLKAFFDHGKDMNDDQYSNQLLDILLYLRNNQLYPGESFAHSIKTWFESIPGRQWKGQFTTIQKSGQCSSCGRAIESIHLSPEEYEFLKETIMRDVIDGGDQYKKTTPQELKRFERFVKSCPPFDIVIDGLNVAKMFPKGRESQNLLGIVSQLAQQNLQLLVLGRKHMLRPSSQWRKDEMEQVRKQAHCFFADNISEDDPFLLYATLNSGSHCKFITKDLLRDHKACLPDARAQRLFFKWQQGHQLAITKGFLKSKLTFQHILSYDTVVQTTGDTWHIPYDEDLVPRSSCEVPTKWLCLQRKTPAPC.

Residues 1–46 (MTFYLSGFRSFLKLWKSNPYFELGPATSSASFFLGVHCVIGNQQRW) constitute a mitochondrion transit peptide. A disordered region spans residues 94-114 (KRSHLSGNPQNQGHTLPVKST). The span at 98–114 (LSGNPQNQGHTLPVKST) shows a compositional bias: polar residues. Residues 342–578 (IQKSGQCSSC…SCEVPTKWLC (237 aa)) form the PRORP domain. Cys348 and Cys351 together coordinate Zn(2+). The Mg(2+) site is built by Asp409, Asp478, Asp479, and Asp499. Residues His557 and Cys578 each coordinate Zn(2+).

This sequence belongs to the PPR family. P subfamily. As to quaternary structure, catalytic component of mitochondrial ribonuclease P, a complex composed of TRMT10C/MRPP1, HSD17B10/MRPP2 and PRORP/MRPP3. Mg(2+) serves as cofactor. Requires Mn(2+) as cofactor. Post-translationally, degraded by LONP1 following mitochondrial unfolded protein response, probably leading to inhibit translation in mitochondrion.

The protein resides in the mitochondrion. It carries out the reaction Endonucleolytic cleavage of RNA, removing 5'-extranucleotides from tRNA precursor.. In terms of biological role, catalytic ribonuclease component of mitochondrial ribonuclease P, a complex composed of TRMT10C/MRPP1, HSD17B10/MRPP2 and PRORP/MRPP3, which cleaves tRNA molecules in their 5'-ends. The presence of TRMT10C/MRPP1, HSD17B10/MRPP2 is required to catalyze tRNA molecules in their 5'-ends. This Rattus norvegicus (Rat) protein is Mitochondrial ribonuclease P catalytic subunit (Prorp).